The chain runs to 206 residues: Imidazoleglycerol-phosphate dehydratase (206 aa).

Positions 1 to 21 (MTALDSSRLLQPRTASVHRRT) are disordered.

This sequence belongs to the imidazoleglycerol-phosphate dehydratase family.

The protein localises to the cytoplasm. The enzyme catalyses D-erythro-1-(imidazol-4-yl)glycerol 3-phosphate = 3-(imidazol-4-yl)-2-oxopropyl phosphate + H2O. Its pathway is amino-acid biosynthesis; L-histidine biosynthesis; L-histidine from 5-phospho-alpha-D-ribose 1-diphosphate: step 6/9. The polypeptide is Imidazoleglycerol-phosphate dehydratase (Synechococcus sp. (strain JA-2-3B'a(2-13)) (Cyanobacteria bacterium Yellowstone B-Prime)).